A 358-amino-acid chain; its full sequence is Photosystem II protein D1 3 (358 aa).

3 consecutive transmembrane segments (helical) span residues 28 to 45 (YIGW…AATT), 117 to 132 (HFLI…QWEL), and 141 to 155 (WICV…AAMA). H117 is a binding site for chlorophyll a. Pheophytin a is bound at residue Y125. [CaMn4O5] cluster-binding residues include D169 and E188. The chain crosses the membrane as a helical span at residues 196 to 217 (FHMLGVAGVFGGSLFSAMHGSL). A chlorophyll a-binding site is contributed by H197. A quinone-binding positions include H214 and 263–264 (SF). H214 lines the Fe cation pocket. Fe cation is bound at residue H271. A helical membrane pass occupies residues 273-287 (LLGAWPVVGIWFTSM). Residues H331, E332, D341, and A343 each contribute to the [CaMn4O5] cluster site. Positions 344-358 (TVESTPVALQAPAIG) are excised as a propeptide.

It belongs to the reaction center PufL/M/PsbA/D family. As to quaternary structure, PSII is composed of 1 copy each of membrane proteins PsbA, PsbB, PsbC, PsbD, PsbE, PsbF, PsbH, PsbI, PsbJ, PsbK, PsbL, PsbM, PsbT, PsbX, PsbY, PsbZ, Psb30/Ycf12, peripheral proteins PsbO, CyanoQ (PsbQ), PsbU, PsbV and a large number of cofactors. It forms dimeric complexes. The D1/D2 heterodimer binds P680, chlorophylls that are the primary electron donor of PSII, and subsequent electron acceptors. It shares a non-heme iron and each subunit binds pheophytin, quinone, additional chlorophylls, carotenoids and lipids. D1 provides most of the ligands for the Mn4-Ca-O5 cluster of the oxygen-evolving complex (OEC). There is also a Cl(-1) ion associated with D1 and D2, which is required for oxygen evolution. The PSII complex binds additional chlorophylls, carotenoids and specific lipids. is required as a cofactor. In terms of processing, tyr-160 forms a radical intermediate that is referred to as redox-active TyrZ, YZ or Y-Z. C-terminally processed by CtpA; processing is essential to allow assembly of the oxygen-evolving complex and thus photosynthetic growth.

Its subcellular location is the cellular thylakoid membrane. The enzyme catalyses 2 a plastoquinone + 4 hnu + 2 H2O = 2 a plastoquinol + O2. Its function is as follows. Photosystem II (PSII) is a light-driven water:plastoquinone oxidoreductase that uses light energy to abstract electrons from H(2)O, generating O(2) and a proton gradient subsequently used for ATP formation. It consists of a core antenna complex that captures photons, and an electron transfer chain that converts photonic excitation into a charge separation. The D1/D2 (PsbA/PsbD) reaction center heterodimer binds P680, the primary electron donor of PSII as well as several subsequent electron acceptors. This chain is Photosystem II protein D1 3, found in Synechococcus sp. (strain CC9311).